An 862-amino-acid chain; its full sequence is DNA mismatch repair protein MutS (862 aa).

603–610 (GPNMSGKS) is a binding site for ATP.

This sequence belongs to the DNA mismatch repair MutS family.

Functionally, this protein is involved in the repair of mismatches in DNA. It is possible that it carries out the mismatch recognition step. This protein has a weak ATPase activity. The chain is DNA mismatch repair protein MutS from Bacillus velezensis (strain DSM 23117 / BGSC 10A6 / LMG 26770 / FZB42) (Bacillus amyloliquefaciens subsp. plantarum).